The primary structure comprises 323 residues: GDSL esterase/lipase At5g03980 (323 aa).

The signal sequence occupies residues Met-1–Ser-21. Residue Ser-36 is the Nucleophile of the active site. Asn-77 carries N-linked (GlcNAc...) asparagine glycosylation. Active-site residues include Asp-294 and His-297.

Belongs to the 'GDSL' lipolytic enzyme family.

It localises to the secreted. The sequence is that of GDSL esterase/lipase At5g03980 from Arabidopsis thaliana (Mouse-ear cress).